The chain runs to 104 residues: Iron-sulfur cluster assembly protein CyaY (104 aa).

This sequence belongs to the frataxin family.

Its function is as follows. Involved in iron-sulfur (Fe-S) cluster assembly. May act as a regulator of Fe-S biogenesis. The protein is Iron-sulfur cluster assembly protein CyaY of Aeromonas salmonicida (strain A449).